The following is a 976-amino-acid chain: Alpha-amylase (976 aa).

The first 33 residues, 1-33, serve as a signal peptide directing secretion; that stretch reads MKRGKLWGRLVSAAGLSLSIFLSSIGNVSTAYA. The disordered stretch occupies residues 45 to 98; it reads TKENTESATDASSNEASDAEADNDTDEAITDASSKELSAENDGASESDSSFDEY. The span at 50-60 shows a compositional bias: low complexity; sequence ESATDASSNEA. Composition is skewed to acidic residues over residues 61 to 73 and 87 to 96; these read SDAE…DEAI and GASESDSSFD. 3 residues coordinate Ca(2+): Asn-243, Thr-284, and Asp-293. Residue Asp-323 is the Nucleophile of the active site. His-327 provides a ligand contact to Ca(2+). Glu-375 functions as the Proton donor in the catalytic mechanism.

The protein belongs to the glycosyl hydrolase 13 family. In terms of assembly, monomer. Ca(2+) is required as a cofactor.

The catalysed reaction is Endohydrolysis of (1-&gt;4)-alpha-D-glucosidic linkages in polysaccharides containing three or more (1-&gt;4)-alpha-linked D-glucose units.. This chain is Alpha-amylase (amyA), found in Butyrivibrio fibrisolvens.